Consider the following 435-residue polypeptide: Eukaryotic translation initiation factor 3 subunit E (435 aa).

The PCI domain maps to 241–409 (TDMFFSPSYI…GTVIMNHPPQ (169 aa)).

This sequence belongs to the eIF-3 subunit E family. In terms of assembly, component of the eukaryotic translation initiation factor 3 (eIF-3) complex.

Its subcellular location is the cytoplasm. In terms of biological role, component of the eukaryotic translation initiation factor 3 (eIF-3) complex, which is involved in protein synthesis of a specialized repertoire of mRNAs and, together with other initiation factors, stimulates binding of mRNA and methionyl-tRNAi to the 40S ribosome. The eIF-3 complex specifically targets and initiates translation of a subset of mRNAs involved in cell proliferation. In Phaeosphaeria nodorum (strain SN15 / ATCC MYA-4574 / FGSC 10173) (Glume blotch fungus), this protein is Eukaryotic translation initiation factor 3 subunit E.